The primary structure comprises 380 residues: Cytochrome b (380 aa).

4 consecutive transmembrane segments (helical) span residues phenylalanine 34 to alanine 54, tryptophan 78 to isoleucine 99, tryptophan 114 to leucine 134, and phenylalanine 179 to threonine 199. Histidine 84 and histidine 98 together coordinate heme b. Positions 183 and 197 each coordinate heme b. Histidine 202 is an a ubiquinone binding site. A run of 4 helical transmembrane segments spans residues leucine 227–serine 247, leucine 289–histidine 309, phenylalanine 321–serine 341, and phenylalanine 348–proline 368.

This sequence belongs to the cytochrome b family. As to quaternary structure, the cytochrome bc1 complex contains 11 subunits: 3 respiratory subunits (MT-CYB, CYC1 and UQCRFS1), 2 core proteins (UQCRC1 and UQCRC2) and 6 low-molecular weight proteins (UQCRH/QCR6, UQCRB/QCR7, UQCRQ/QCR8, UQCR10/QCR9, UQCR11/QCR10 and a cleavage product of UQCRFS1). This cytochrome bc1 complex then forms a dimer. Heme b is required as a cofactor.

Its subcellular location is the mitochondrion inner membrane. Component of the ubiquinol-cytochrome c reductase complex (complex III or cytochrome b-c1 complex) that is part of the mitochondrial respiratory chain. The b-c1 complex mediates electron transfer from ubiquinol to cytochrome c. Contributes to the generation of a proton gradient across the mitochondrial membrane that is then used for ATP synthesis. In Bugeranus carunculatus (Wattled crane), this protein is Cytochrome b (MT-CYB).